A 149-amino-acid chain; its full sequence is MSAAEIDIRKILKLLPHRYPFLLVDRVLEFEAQKRIKTLKNVTINEPYFQGHFPEQPVMPGVMILEALAQSAGLLTFGADMERKEGALYYFVGIDGARFKQVVYPGDQLHMNVTVERYIRGIWKFKAFATVDDKVACEAELMCTVKQAE.

The active site involves His-52.

The protein belongs to the thioester dehydratase family. FabZ subfamily.

It is found in the cytoplasm. The enzyme catalyses a (3R)-hydroxyacyl-[ACP] = a (2E)-enoyl-[ACP] + H2O. Its function is as follows. Involved in unsaturated fatty acids biosynthesis. Catalyzes the dehydration of short chain beta-hydroxyacyl-ACPs and long chain saturated and unsaturated beta-hydroxyacyl-ACPs. This is 3-hydroxyacyl-[acyl-carrier-protein] dehydratase FabZ from Cupriavidus necator (strain ATCC 17699 / DSM 428 / KCTC 22496 / NCIMB 10442 / H16 / Stanier 337) (Ralstonia eutropha).